Reading from the N-terminus, the 1116-residue chain is Probable chitinase LysM11 (1116 aa).

In terms of domain architecture, LysM spans 233–283 (GTYTIQTNDNCAEIAAHFGVTQDDIYDLNEDTWGWAGCGTNDLKADQVICL). Positions 346–719 (FYHVAYFEVF…LGVDPDSDEA (374 aa)) constitute a GH18 domain. E466 functions as the Proton donor in the catalytic mechanism. Positions 467 and 701 each coordinate chitin.

This sequence belongs to the glycosyl hydrolase 18 family. Chitinase class V subfamily.

The enzyme catalyses Random endo-hydrolysis of N-acetyl-beta-D-glucosaminide (1-&gt;4)-beta-linkages in chitin and chitodextrins.. In terms of biological role, probable chitinase involved in the degradation of chitin, a component of the cell walls of fungi and exoskeletal elements of some animals (including worms and arthropods). Might be involved in manipulation of host defenses for successful infection. This chain is Probable chitinase LysM11, found in Penicillium expansum (Blue mold rot fungus).